We begin with the raw amino-acid sequence, 624 residues long: MAAAQISAEEMEELREAFTKVDVDGNGHISTDELNALFKAANLPLPGYRVREIIQEISRTMDLNQDGKITFDEFAKVVHDLKSSEVAKTFRKAINKKEGICSVAGTSEQSGTQHSYSEEEKVAFVNWVNKALEKDPDCQHVLPMDPSTDDLFTAVGDGIVLCKMINLSVPDTIDERTINKKKLTPFTIQENLNLALNSASAIGCHVVNIGAEDLKEGRQHLVLGLLWQVIKIGLFADIEISRNEALIALLRDGESLEDLVKLSPEELLLRWANYHLEEAGCPKINNFSSDIKDSKAYYNILNQVAPKRDEEGIPAIPIDISGIREKDDLKRAECMLEQADRLGCRQFVTATDVVRGNPKLNLAYVANLFNKYPALKKPENQDIDWSSIEGETREERTFRNWMNSLGVNPRVNHLYVDLADALVIFQLYEKIKVPVDWDKVNKPPYPKLGSNMKKLENCNYAVELGKKEAKFSLVGIAGQDLNEGNRTLTLALLWQLMRRYTLNILEDLGDGQKIIDETIVQWVNETLTQAGKGTISGFKDGSISSSMPVLDLIDAIQPGSIRYDLLKAEDLTDEKKLNNAKYAISMARKIGARVYALPEDLVEVKPKMVMTVFACLMARGMRRI.

EF-hand domains are found at residues Glu-9–Pro-44 and Arg-49–Ser-84. The Ca(2+) site is built by Asp-22, Asp-24, Asn-26, His-28, Glu-33, Asp-62, Asn-64, Asp-66, Lys-68, and Glu-73. 4 Calponin-homology (CH) domains span residues Glu-118–Leu-234, Leu-262–Pro-373, Thr-392–Thr-501, and Lys-513–Met-621. Actin-binding stretches follow at residues Glu-118–Pro-373 and Thr-392–Met-621.

As to quaternary structure, monomer. Expressed by macrophages (at protein level).

The protein resides in the cytoplasm. It is found in the cytoskeleton. It localises to the cell junction. Its subcellular location is the cell projection. The protein localises to the ruffle membrane. Functionally, actin-binding protein. Plays a role in the activation of T-cells. This chain is Plastin-2, found in Danio rerio (Zebrafish).